We begin with the raw amino-acid sequence, 570 residues long: Spastin (570 aa).

Over Met1 to Leu35 the chain is Cytoplasmic. Positions Ser36–Trp52 form an intramembrane region, helical. The Cytoplasmic segment spans residues Leu53–Val570. One can recognise an MIT domain in the interval Tyr83–Leu158. A disordered region spans residues Ala186–Asn269. Composition is skewed to polar residues over residues Leu199–Arg208, Thr216–Gly242, and Val251–Pro261. Gly335–Thr342 lines the ATP pocket.

Belongs to the AAA ATPase family. Spastin subfamily. In terms of assembly, homohexamer. The homohexamer is stabilized by ATP-binding. The homohexamer may adopt a ring conformation through which microtubules pass prior to being severed. Interacts with microtubules.

It localises to the membrane. The protein resides in the cytoplasm. It is found in the cytoskeleton. The protein localises to the microtubule organizing center. Its subcellular location is the centrosome. It localises to the perinuclear region. The protein resides in the nucleus. It carries out the reaction n ATP + n H2O + a microtubule = n ADP + n phosphate + (n+1) alpha/beta tubulin heterodimers.. Functionally, ATP-dependent microtubule severing protein that specifically recognizes and cuts microtubules that are polyglutamylated. Preferentially recognizes and acts on microtubules decorated with short polyglutamate tails: severing activity increases as the number of glutamates per tubulin rises from one to eight, but decreases beyond this glutamylation threshold. Microtubule severing promotes reorganization of cellular microtubule arrays and the release of microtubules from the centrosome following nucleation. Required for membrane traffic from the endoplasmic reticulum (ER) to the Golgi and for completion of the abscission stage of cytokinesis. Also plays a role in axon growth and the formation of axonal branches. In Danio rerio (Zebrafish), this protein is Spastin.